A 94-amino-acid polypeptide reads, in one-letter code: Co-chaperonin GroES (94 aa).

It belongs to the GroES chaperonin family. In terms of assembly, heptamer of 7 subunits arranged in a ring. Interacts with the chaperonin GroEL.

The protein localises to the cytoplasm. In terms of biological role, together with the chaperonin GroEL, plays an essential role in assisting protein folding. The GroEL-GroES system forms a nano-cage that allows encapsulation of the non-native substrate proteins and provides a physical environment optimized to promote and accelerate protein folding. GroES binds to the apical surface of the GroEL ring, thereby capping the opening of the GroEL channel. This Anoxybacillus flavithermus (strain DSM 21510 / WK1) protein is Co-chaperonin GroES.